Consider the following 147-residue polypeptide: Sec-independent protein translocase protein TatB (147 aa).

The chain crosses the membrane as a helical span at residues 2 to 22; that stretch reads FDGIGFMELLLIGVLGLVVLG. The interval 68–147 is disordered; sequence ESKGLSNLSP…DTRSNPKANG (80 aa). A compositionally biased stretch (polar residues) spans 71-97; sequence GLSNLSPELQESIDQLKQAAQSVNRPY. Low complexity predominate over residues 112 to 133; sequence PASQSVSSEASPTASSAPTSEP.

It belongs to the TatB family. The Tat system comprises two distinct complexes: a TatABC complex, containing multiple copies of TatA, TatB and TatC subunits, and a separate TatA complex, containing only TatA subunits. Substrates initially bind to the TatABC complex, which probably triggers association of the separate TatA complex to form the active translocon.

The protein resides in the cell inner membrane. Part of the twin-arginine translocation (Tat) system that transports large folded proteins containing a characteristic twin-arginine motif in their signal peptide across membranes. Together with TatC, TatB is part of a receptor directly interacting with Tat signal peptides. TatB may form an oligomeric binding site that transiently accommodates folded Tat precursor proteins before their translocation. The protein is Sec-independent protein translocase protein TatB of Shewanella sp. (strain MR-4).